Reading from the N-terminus, the 198-residue chain is Ribonuclease HII (198 aa).

Residues F3–P198 enclose the RNase H type-2 domain. 3 residues coordinate a divalent metal cation: D9, E10, and D104.

This sequence belongs to the RNase HII family. Mn(2+) serves as cofactor. Requires Mg(2+) as cofactor.

Its subcellular location is the cytoplasm. It catalyses the reaction Endonucleolytic cleavage to 5'-phosphomonoester.. In terms of biological role, endonuclease that specifically degrades the RNA of RNA-DNA hybrids. The sequence is that of Ribonuclease HII from Pyrobaculum neutrophilum (strain DSM 2338 / JCM 9278 / NBRC 100436 / V24Sta) (Thermoproteus neutrophilus).